The following is a 128-amino-acid chain: MALPKDMRLKGHRTFNYIHKNSIKYHGKLMTFKVARSNPEILLSHNHTNASNNFRAAIAISKKVSKKAVDRNKIRRILQEWLITNIPKINSHKPYWLLVNLKFGDFCNDKNKLLEEFQNLMFKSRLIK.

The protein belongs to the RnpA family. In terms of assembly, consists of a catalytic RNA component (M1 or rnpB) and a protein subunit.

The enzyme catalyses Endonucleolytic cleavage of RNA, removing 5'-extranucleotides from tRNA precursor.. In terms of biological role, RNaseP catalyzes the removal of the 5'-leader sequence from pre-tRNA to produce the mature 5'-terminus. It can also cleave other RNA substrates such as 4.5S RNA. The protein component plays an auxiliary but essential role in vivo by binding to the 5'-leader sequence and broadening the substrate specificity of the ribozyme. This Prochlorococcus marinus (strain MIT 9312) protein is Ribonuclease P protein component.